The following is a 154-amino-acid chain: Cyclin-dependent protein kinase inhibitor SMR14 (154 aa).

The interval 1–111 is disordered; the sequence is MSKIKIFHLF…RPPRKPKAIP (111 aa). Over residues 24 to 37 the composition is skewed to low complexity; it reads SLLVPSKSDSLDSS. Residues 74–83 show a composition bias toward basic and acidic residues; that stretch reads KWECKDEESP.

In terms of biological role, probable cyclin-dependent protein kinase (CDK) inhibitor that functions as a repressor of mitosis in the endoreduplication cell cycle. This Arabidopsis thaliana (Mouse-ear cress) protein is Cyclin-dependent protein kinase inhibitor SMR14.